The primary structure comprises 207 residues: MNTKSPILILIAGASGSGKTTFANEIIARIPKNTTSVVICQDSYYISNSQLNKKERRLINYDHPSSFEWELMREQLSDIKKRKKIKVPIYDYKTEIRLDKTIDISDVDVIVLEGIYAIYDDVINQIADLKIFIETPKDECLIRRILRDVNERNRSFESVITQWRSTVSPMYDQFVEPSKKNANVSVLWNEHNRVALHLIHKWINNIH.

13–20 (GASGSGKT) lines the ATP pocket.

The protein belongs to the uridine kinase family.

The protein localises to the cytoplasm. The catalysed reaction is uridine + ATP = UMP + ADP + H(+). The enzyme catalyses cytidine + ATP = CMP + ADP + H(+). Its pathway is pyrimidine metabolism; CTP biosynthesis via salvage pathway; CTP from cytidine: step 1/3. The protein operates within pyrimidine metabolism; UMP biosynthesis via salvage pathway; UMP from uridine: step 1/1. The protein is Uridine kinase of Ureaplasma parvum serovar 3 (strain ATCC 27815 / 27 / NCTC 11736).